The sequence spans 303 residues: Acetaldehyde dehydrogenase (303 aa).

13-16 (SGNI) provides a ligand contact to NAD(+). Cys128 acts as the Acyl-thioester intermediate in catalysis. Residues 159–167 (SAGPGTRQN) and Asn278 contribute to the NAD(+) site.

It belongs to the acetaldehyde dehydrogenase family.

The enzyme catalyses acetaldehyde + NAD(+) + CoA = acetyl-CoA + NADH + H(+). This chain is Acetaldehyde dehydrogenase, found in Chloroflexus aggregans (strain MD-66 / DSM 9485).